The primary structure comprises 963 residues: Vacuolar membrane protease (963 aa).

At 1-15 (MVSSRRGFNPIAFTP) the chain is on the cytoplasmic side. Residues 16-36 (WPVTILTSLVYLALIIPIIVV) traverse the membrane as a helical segment. Residues 37–391 (HHLVPPAPKQ…FQLNTLFGLS (355 aa)) lie on the Vacuolar side of the membrane. N-linked (GlcNAc...) asparagine glycosylation is found at asparagine 111 and asparagine 114. Positions 170 and 182 each coordinate Zn(2+). Glutamate 216 serves as the catalytic Proton acceptor. Residues glutamate 217, glutamate 242, and histidine 315 each coordinate Zn(2+). A helical transmembrane segment spans residues 392-412 (VALLVVAPLLLILTSVALFAV). The Cytoplasmic segment spans residues 413 to 441 (DKMYMFSMYTYLSESGGQVSLYGLRGMFR). The helical transmembrane segment at 442–462 (FPLILGISTALTVALAFLIMK) threads the bilayer. The Vacuolar segment spans residues 463–473 (VNPFIIYSSPY). A helical membrane pass occupies residues 474 to 494 (AVWSMMLSTCMFFAWFISCVA). The Cytoplasmic portion of the chain corresponds to 495–504 (DFARPSALHR). The helical transmembrane segment at 505-525 (AYAFSWMFGILWVFLVIATVY) threads the bilayer. Over 526-535 (QRQHGIASSY) the chain is Vacuolar. Residues 536 to 556 (FIVFYFAGVSVATWISYLELF) form a helical membrane-spanning segment. At 557–668 (GLSTTQDYAR…WSIYLVSSAW (112 aa)) the chain is on the cytoplasmic side. Residues 569-618 (SRLSDRTPSSDSHLLAPSADELPSSGSVAGRDFNPEDVEDEEPTESTSLL) are disordered. The segment covering 603–612 (PEDVEDEEPT) has biased composition (acidic residues). Residues 669–689 (ILQFLLVAPIVLILLGQLGLF) traverse the membrane as a helical segment. Residues 690–705 (LTSATYQIGADGGSQF) are Vacuolar-facing. The chain crosses the membrane as a helical span at residues 706 to 726 (IIYIGIAVLSVLILLPLFPFI). The Cytoplasmic segment spans residues 727 to 732 (HRFTYH). A helical transmembrane segment spans residues 733–753 (IPTFMLFVLIGTLVYNLTAFP). Topologically, residues 754–963 (FSHNSRLKVA…LVEGSYSFKL (210 aa)) are vacuolar. Asparagine 835 carries an N-linked (GlcNAc...) asparagine glycan.

It belongs to the peptidase M28 family. It depends on Zn(2+) as a cofactor.

It localises to the vacuole membrane. May be involved in vacuolar sorting and osmoregulation. This Arthroderma gypseum (strain ATCC MYA-4604 / CBS 118893) (Microsporum gypseum) protein is Vacuolar membrane protease.